A 256-amino-acid polypeptide reads, in one-letter code: Enolase-phosphatase E1 (256 aa).

The Mg(2+) site is built by Asp14 and Glu16. Substrate is bound by residues 142-143 and Lys176; that span reads SS. Mg(2+) is bound at residue Asp201.

It belongs to the HAD-like hydrolase superfamily. MasA/MtnC family. As to quaternary structure, monomer. The cofactor is Mg(2+).

Its subcellular location is the cytoplasm. The protein localises to the nucleus. It carries out the reaction 5-methylsulfanyl-2,3-dioxopentyl phosphate + H2O = 1,2-dihydroxy-5-(methylsulfanyl)pent-1-en-3-one + phosphate. It participates in amino-acid biosynthesis; L-methionine biosynthesis via salvage pathway; L-methionine from S-methyl-5-thio-alpha-D-ribose 1-phosphate: step 3/6. The protein operates within amino-acid biosynthesis; L-methionine biosynthesis via salvage pathway; L-methionine from S-methyl-5-thio-alpha-D-ribose 1-phosphate: step 4/6. Functionally, bifunctional enzyme that catalyzes the enolization of 2,3-diketo-5-methylthiopentyl-1-phosphate (DK-MTP-1-P) into the intermediate 2-hydroxy-3-keto-5-methylthiopentenyl-1-phosphate (HK-MTPenyl-1-P), which is then dephosphorylated to form the acireductone 1,2-dihydroxy-3-keto-5-methylthiopentene (DHK-MTPene). This Drosophila melanogaster (Fruit fly) protein is Enolase-phosphatase E1.